The following is a 304-amino-acid chain: Sulfate adenylyltransferase subunit 2 2 (304 aa).

Belongs to the PAPS reductase family. CysD subfamily. In terms of assembly, heterodimer composed of CysD, the smaller subunit, and CysN.

The catalysed reaction is sulfate + ATP + H(+) = adenosine 5'-phosphosulfate + diphosphate. Its pathway is sulfur metabolism; hydrogen sulfide biosynthesis; sulfite from sulfate: step 1/3. Functionally, with CysN forms the ATP sulfurylase (ATPS) that catalyzes the adenylation of sulfate producing adenosine 5'-phosphosulfate (APS) and diphosphate, the first enzymatic step in sulfur assimilation pathway. APS synthesis involves the formation of a high-energy phosphoric-sulfuric acid anhydride bond driven by GTP hydrolysis by CysN coupled to ATP hydrolysis by CysD. In Marinobacter nauticus (strain ATCC 700491 / DSM 11845 / VT8) (Marinobacter aquaeolei), this protein is Sulfate adenylyltransferase subunit 2 2.